Reading from the N-terminus, the 527-residue chain is MSKAATVPVAFQDREKPQEVRLSNIMAARSVADAIRTSLGPKGMDKMIQTGKGEVILTNDGATILKHLSVLHPAAKMLVDLSAAQDVEAGDGTTSVVILAGSMLACAEKLLKKGIHPTVIAESFQRAAGFTVDCMKENALAIELSDRESLLRAATTSLNSKIVSQYSNLLAPIAVDAVLKVIDPRVATNVDLKDIRIVKKLGGIIDDTELIPGLALTQTAVKSAGGPTRIEKANIALIQFQLSPPKPDMENQVVVNDYRQMDKILKEERQYLLNMCKKIKKAGANVILIQKSILRDAVNDLALHFLAKLKIMVIKDIERDEVEFICKSTGCKPIADIESFAEDKLGHADLVEETSSSGEKIVKFSGVKNAGKTVSILCRGANLLTLEEAERSLHDALCVIRCLVKQRALIAGGGSPEIEAAQRLLEHARQLEGREAICIRAFSEALEIIPVTLAENAGLNAIQVVTELRSRHANGEKTAGINVRKGIVTNILEENVLQPLLVNISAIQLAAETTKMIMKIDDITLAR.

The protein belongs to the TCP-1 chaperonin family. As to quaternary structure, heterooligomeric complex of about 850 to 900 kDa that forms two stacked rings, 12 to 16 nm in diameter.

Its subcellular location is the cytoplasm. In terms of biological role, molecular chaperone; assists the folding of proteins upon ATP hydrolysis. Known to play a role, in vitro, in the folding of actin and tubulin. This is T-complex protein 1 subunit delta (cct4) from Schizosaccharomyces pombe (strain 972 / ATCC 24843) (Fission yeast).